The following is a 92-amino-acid chain: Small ribosomal subunit protein uS19c (92 aa).

Belongs to the universal ribosomal protein uS19 family.

The protein resides in the plastid. It localises to the chloroplast. Its function is as follows. Protein S19 forms a complex with S13 that binds strongly to the 16S ribosomal RNA. The protein is Small ribosomal subunit protein uS19c of Ostreococcus tauri.